The primary structure comprises 108 residues: MSGSAKYSDWSQVMTLIANAAEQGNHQPLLTMLMTPDEREALVARVNIFHELLQGELSQRQISQLLGVGVATITRGSNELKSHTDEEKVWLMDLLEKSTKSELDVEKE.

The DNA-binding element occupies Gln-59–Ser-82.

It belongs to the TrpR family. In terms of assembly, homodimer.

It localises to the cytoplasm. Its function is as follows. This protein is an aporepressor. When complexed with L-tryptophan it binds the operator region of the trp operon and prevents the initiation of transcription. The chain is Trp operon repressor homolog from Aliivibrio fischeri (strain ATCC 700601 / ES114) (Vibrio fischeri).